Here is a 207-residue protein sequence, read N- to C-terminus: Small ribosomal subunit protein uS4c (207 aa).

Residues 92–156 (MRLDNILFRL…YQSIITKRIE (65 aa)) form the S4 RNA-binding domain.

It belongs to the universal ribosomal protein uS4 family. Part of the 30S ribosomal subunit. Contacts protein S5. The interaction surface between S4 and S5 is involved in control of translational fidelity.

The protein resides in the plastid. The protein localises to the chloroplast. Its function is as follows. One of the primary rRNA binding proteins, it binds directly to 16S rRNA where it nucleates assembly of the body of the 30S subunit. Functionally, with S5 and S12 plays an important role in translational accuracy. The chain is Small ribosomal subunit protein uS4c (rps4) from Equisetum pratense (Meadow horsetail).